We begin with the raw amino-acid sequence, 567 residues long: 2-succinyl-5-enolpyruvyl-6-hydroxy-3-cyclohexene-1-carboxylate synthase (567 aa).

This sequence belongs to the TPP enzyme family. MenD subfamily. As to quaternary structure, homodimer. It depends on Mg(2+) as a cofactor. Mn(2+) is required as a cofactor. The cofactor is thiamine diphosphate.

The catalysed reaction is isochorismate + 2-oxoglutarate + H(+) = 5-enolpyruvoyl-6-hydroxy-2-succinyl-cyclohex-3-ene-1-carboxylate + CO2. It participates in quinol/quinone metabolism; 1,4-dihydroxy-2-naphthoate biosynthesis; 1,4-dihydroxy-2-naphthoate from chorismate: step 2/7. The protein operates within quinol/quinone metabolism; menaquinone biosynthesis. Functionally, catalyzes the thiamine diphosphate-dependent decarboxylation of 2-oxoglutarate and the subsequent addition of the resulting succinic semialdehyde-thiamine pyrophosphate anion to isochorismate to yield 2-succinyl-5-enolpyruvyl-6-hydroxy-3-cyclohexene-1-carboxylate (SEPHCHC). The polypeptide is 2-succinyl-5-enolpyruvyl-6-hydroxy-3-cyclohexene-1-carboxylate synthase (Yersinia pseudotuberculosis serotype O:1b (strain IP 31758)).